Here is a 603-residue protein sequence, read N- to C-terminus: Polypeptide N-acetylgalactosaminyltransferase 10 (603 aa).

The Cytoplasmic segment spans residues 1 to 11 (MRRKEKRLLQA). Residues 12 to 31 (VALALAALVLLPNVGLWALY) form a helical; Signal-anchor for type II membrane protein membrane-spanning segment. Over 32–603 (RERQPDGSPG…STVLENFNRN (572 aa)) the chain is Lumenal. Residues N124 and N146 are each glycosylated (N-linked (GlcNAc...) asparagine). 5 cysteine pairs are disulfide-bonded: C135/C365, C356/C432, C471/C488, C523/C538, and C563/C578. The interval 144–253 (LPNTSIIIPF…VNWLPPLLDR (110 aa)) is catalytic subdomain A. Substrate contacts are provided by D185 and R214. Mn(2+) is bound at residue D237. S238 lines the substrate pocket. H239 lines the Mn(2+) pocket. A catalytic subdomain B region spans residues 311–373 (PFESPVMAGG…PCSRVGHIYR (63 aa)). Position 342 (W342) interacts with substrate. H370 provides a ligand contact to Mn(2+). R373 and Y378 together coordinate substrate. The flexible loop stretch occupies residues 373–384 (RKYVPYKVPAGV). A Ricin B-type lectin domain is found at 458–590 (AAWGEIRNVG…SSLTQQWLFE (133 aa)). The N-linked (GlcNAc...) asparagine glycan is linked to N593.

This sequence belongs to the glycosyltransferase 2 family. GalNAc-T subfamily. It depends on Mn(2+) as a cofactor. In terms of tissue distribution, highly expressed in the sublingual gland, testis, small intestine, colon and ovary. Expressed at intermediate level in heart, brain, spleen, lung, stomach, cervix and uterus.

It is found in the golgi apparatus membrane. The enzyme catalyses L-seryl-[protein] + UDP-N-acetyl-alpha-D-galactosamine = a 3-O-[N-acetyl-alpha-D-galactosaminyl]-L-seryl-[protein] + UDP + H(+). It carries out the reaction L-threonyl-[protein] + UDP-N-acetyl-alpha-D-galactosamine = a 3-O-[N-acetyl-alpha-D-galactosaminyl]-L-threonyl-[protein] + UDP + H(+). It functions in the pathway protein modification; protein glycosylation. Functionally, catalyzes the initial reaction in O-linked oligosaccharide biosynthesis, the transfer of an N-acetyl-D-galactosamine residue to a serine or threonine residue on the protein receptor. Has activity toward Muc5Ac and EA2 peptide substrates. The chain is Polypeptide N-acetylgalactosaminyltransferase 10 (Galnt10) from Rattus norvegicus (Rat).